The chain runs to 329 residues: Biotin synthase (329 aa).

Residues Phe48–Arg278 form the Radical SAM core domain. Residues Cys66, Cys70, and Cys73 each contribute to the [4Fe-4S] cluster site. 2 residues coordinate [2Fe-2S] cluster: Ser143 and Cys203.

Belongs to the radical SAM superfamily. Biotin synthase family. In terms of assembly, homodimer. Requires [4Fe-4S] cluster as cofactor. [2Fe-2S] cluster is required as a cofactor.

The enzyme catalyses (4R,5S)-dethiobiotin + (sulfur carrier)-SH + 2 reduced [2Fe-2S]-[ferredoxin] + 2 S-adenosyl-L-methionine = (sulfur carrier)-H + biotin + 2 5'-deoxyadenosine + 2 L-methionine + 2 oxidized [2Fe-2S]-[ferredoxin]. It participates in cofactor biosynthesis; biotin biosynthesis; biotin from 7,8-diaminononanoate: step 2/2. In terms of biological role, catalyzes the conversion of dethiobiotin (DTB) to biotin by the insertion of a sulfur atom into dethiobiotin via a radical-based mechanism. This is Biotin synthase from Geotalea uraniireducens (strain Rf4) (Geobacter uraniireducens).